A 64-amino-acid chain; its full sequence is Large ribosomal subunit protein bL33 (64 aa).

It belongs to the bacterial ribosomal protein bL33 family.

This is Large ribosomal subunit protein bL33 from Synechococcus sp. (strain JA-3-3Ab) (Cyanobacteria bacterium Yellowstone A-Prime).